The following is a 348-amino-acid chain: Pheromone P-factor receptor (348 aa).

Transmembrane regions (helical) follow at residues 46–69 (LLTG…VCLL), 79–103 (VFVF…TICS), 125–141 (VFNI…IFTA), 162–180 (IMTV…FWIT), 207–225 (YFIA…SGVF), 249–267 (CILV…FTII), and 283–301 (CLLI…STAL).

Belongs to the G-protein coupled receptor 4 family.

Its subcellular location is the membrane. In terms of biological role, receptor for the peptide pheromone P-factor, a mating factor of S.pombe. Pheromone signaling is essential for initiation of meiosis in S.pombe; P-factor signaling alone may be sufficient. The sequence is that of Pheromone P-factor receptor (mam2) from Schizosaccharomyces pombe (strain 972 / ATCC 24843) (Fission yeast).